The primary structure comprises 436 residues: MDVTQSNATKDDANITVTPWPYTETAAAFIILVVSVIILVSIVGNVLVIVAVLTSRALRAPQNLFLVSLACADILVATLVIPFSLANEIMGYWFFGSTWCAFYLALDVLFCTSSIVHLCAISLDRYWSVTKAVSYNLKRTPKRIKSMIAVVWVISAVISFPPLIMTKHDEKECLINDETWYILSSSLVSFFAPGFIMITVYCKIYRVAKQRSSTVFVAKNGLERQPSQSETCFVRKDKFEKESPSSNSSESNQRQEELDDIDLEESATSDNKPKSSRFSNRRRVDGARCCPQRTCRISWVSSQEQSSKQLAVASKTKVAQMREKRFTFVLTVVMGVFVLCWFPFFFTYSLHAICGDSCEPPEALFKLFFWIGYCNSSVNPIIYTIFNRDFRKAFKKICLLDCAAHLRDSCLGTLGRLNAKCIFECHQKSNQEETAN.

Topologically, residues methionine 1–alanine 27 are extracellular. N-linked (GlcNAc...) asparagine glycosylation is found at asparagine 7 and asparagine 14. Residues alanine 28–valine 52 form a helical membrane-spanning segment. Residues leucine 53–leucine 64 lie on the Cytoplasmic side of the membrane. Residues phenylalanine 65 to methionine 90 traverse the membrane as a helical segment. At glycine 91–cysteine 100 the chain is on the extracellular side. Residues cysteine 100 and cysteine 173 are joined by a disulfide bond. A helical membrane pass occupies residues alanine 101–leucine 123. Residues aspartate 124–isoleucine 144 lie on the Cytoplasmic side of the membrane. Residues lysine 145–lysine 167 traverse the membrane as a helical segment. Residues histidine 168–glutamate 178 are Extracellular-facing. Residues threonine 179–cysteine 202 form a helical membrane-spanning segment. Residues lysine 203–valine 329 are Cytoplasmic-facing. The disordered stretch occupies residues lysine 238–asparagine 280. A compositionally biased stretch (acidic residues) spans glutamate 257–alanine 267. The helical transmembrane segment at leucine 330 to isoleucine 353 threads the bilayer. Topologically, residues cysteine 354–lysine 366 are extracellular. A helical transmembrane segment spans residues leucine 367–asparagine 387. Topologically, residues arginine 388–asparagine 436 are cytoplasmic.

The protein belongs to the G-protein coupled receptor 1 family.

The protein resides in the cell membrane. Functionally, alpha-2 adrenergic receptors mediate the catecholamine-induced inhibition of adenylate cyclase through the action of G proteins. The protein is Alpha-2 adrenergic receptor of Carassius auratus (Goldfish).